The sequence spans 117 residues: Non-specific lipid-transfer protein 3 (117 aa).

The signal sequence occupies residues 1-25 (MAGLVKLSCLVLACMIVAGPIATNA). Intrachain disulfides connect Cys29–Cys76, Cys39–Cys53, Cys54–Cys99, and Cys74–Cys113.

The protein belongs to the plant LTP family.

In terms of biological role, plant non-specific lipid-transfer proteins transfer phospholipids as well as galactolipids across membranes. May play a role in wax or cutin deposition in the cell walls of expanding epidermal cells and certain secretory tissues. The chain is Non-specific lipid-transfer protein 3 (LTP3) from Brassica napus (Rape).